A 61-amino-acid chain; its full sequence is MFGLGITEILLILGIIILIFGAKKLPEVGSGLGRAIQNFKKASSESEEIDVTPSKDKNKDA.

A helical membrane pass occupies residues 1–21 (MFGLGITEILLILGIIILIFG).

The protein belongs to the TatA/E family. The Tat system comprises two distinct complexes: a TatABC complex, containing multiple copies of TatA, TatB and TatC subunits, and a separate TatA complex, containing only TatA subunits. Substrates initially bind to the TatABC complex, which probably triggers association of the separate TatA complex to form the active translocon.

It localises to the cell inner membrane. In terms of biological role, part of the twin-arginine translocation (Tat) system that transports large folded proteins containing a characteristic twin-arginine motif in their signal peptide across membranes. TatA could form the protein-conducting channel of the Tat system. The polypeptide is Sec-independent protein translocase protein TatA (Maridesulfovibrio salexigens (strain ATCC 14822 / DSM 2638 / NCIMB 8403 / VKM B-1763) (Desulfovibrio salexigens)).